The following is a 217-amino-acid chain: Ras-related protein RABA1g (217 aa).

GTP is bound at residue 20–27 (GDSGVGKS). The Effector region signature appears at 42–50 (SKSTIGVEF). GTP is bound by residues 68-72 (DTAGQ), 126-129 (NKAD), and 156-157 (SA). S-geranylgeranyl cysteine attachment occurs at residues Cys214 and Cys215.

This sequence belongs to the small GTPase superfamily. Rab family.

Its subcellular location is the cell membrane. Its function is as follows. Intracellular vesicle trafficking and protein transport. This is Ras-related protein RABA1g (RABA1G) from Arabidopsis thaliana (Mouse-ear cress).